Consider the following 98-residue polypeptide: MLLTMEDVEHVARLARLRLSPDELEHMRDQLSKILDHFQMLQQIDVSAVPPTAQVTDLINVMREDEVRPSLPREQALANAPEQQDGMFRVRAIFEEAS.

The protein belongs to the GatC family. As to quaternary structure, heterotrimer of A, B and C subunits.

It catalyses the reaction L-glutamyl-tRNA(Gln) + L-glutamine + ATP + H2O = L-glutaminyl-tRNA(Gln) + L-glutamate + ADP + phosphate + H(+). It carries out the reaction L-aspartyl-tRNA(Asn) + L-glutamine + ATP + H2O = L-asparaginyl-tRNA(Asn) + L-glutamate + ADP + phosphate + 2 H(+). In terms of biological role, allows the formation of correctly charged Asn-tRNA(Asn) or Gln-tRNA(Gln) through the transamidation of misacylated Asp-tRNA(Asn) or Glu-tRNA(Gln) in organisms which lack either or both of asparaginyl-tRNA or glutaminyl-tRNA synthetases. The reaction takes place in the presence of glutamine and ATP through an activated phospho-Asp-tRNA(Asn) or phospho-Glu-tRNA(Gln). In Roseiflexus castenholzii (strain DSM 13941 / HLO8), this protein is Aspartyl/glutamyl-tRNA(Asn/Gln) amidotransferase subunit C.